The primary structure comprises 257 residues: Probable amino-acid ABC transporter ATP-binding protein y4tH (257 aa).

An ABC transporter domain is found at isoleucine 6 to leucine 251. Position 38–45 (glycine 38–serine 45) interacts with ATP.

This sequence belongs to the ABC transporter superfamily.

The protein resides in the cell inner membrane. Functionally, probably part of a binding-protein-dependent transport system y4tEFGH for an amino acid. Probably responsible for energy coupling to the transport system. The chain is Probable amino-acid ABC transporter ATP-binding protein y4tH from Sinorhizobium fredii (strain NBRC 101917 / NGR234).